The following is a 419-amino-acid chain: Serine hydroxymethyltransferase (419 aa).

(6S)-5,6,7,8-tetrahydrofolate contacts are provided by residues Leu-121 and 125–127 (GHL). Lys-231 bears the N6-(pyridoxal phosphate)lysine mark.

This sequence belongs to the SHMT family. As to quaternary structure, homodimer. Pyridoxal 5'-phosphate serves as cofactor.

It is found in the cytoplasm. The catalysed reaction is (6R)-5,10-methylene-5,6,7,8-tetrahydrofolate + glycine + H2O = (6S)-5,6,7,8-tetrahydrofolate + L-serine. The protein operates within one-carbon metabolism; tetrahydrofolate interconversion. Its pathway is amino-acid biosynthesis; glycine biosynthesis; glycine from L-serine: step 1/1. Its function is as follows. Catalyzes the reversible interconversion of serine and glycine with tetrahydrofolate (THF) serving as the one-carbon carrier. This reaction serves as the major source of one-carbon groups required for the biosynthesis of purines, thymidylate, methionine, and other important biomolecules. Also exhibits THF-independent aldolase activity toward beta-hydroxyamino acids, producing glycine and aldehydes, via a retro-aldol mechanism. In Phytoplasma mali (strain AT), this protein is Serine hydroxymethyltransferase.